We begin with the raw amino-acid sequence, 194 residues long: Probable nicotinate-nucleotide adenylyltransferase (194 aa).

This sequence belongs to the NadD family.

The catalysed reaction is nicotinate beta-D-ribonucleotide + ATP + H(+) = deamido-NAD(+) + diphosphate. Its pathway is cofactor biosynthesis; NAD(+) biosynthesis; deamido-NAD(+) from nicotinate D-ribonucleotide: step 1/1. Its function is as follows. Catalyzes the reversible adenylation of nicotinate mononucleotide (NaMN) to nicotinic acid adenine dinucleotide (NaAD). The protein is Probable nicotinate-nucleotide adenylyltransferase of Chlorobium luteolum (strain DSM 273 / BCRC 81028 / 2530) (Pelodictyon luteolum).